We begin with the raw amino-acid sequence, 510 residues long: NAD(P)H-quinone oxidoreductase subunit 2 A, chloroplastic (510 aa).

12 helical membrane-spanning segments follow: residues phenylalanine 31–threonine 51, tryptophan 59–tryptophan 79, isoleucine 99–isoleucine 119, methionine 124–cysteine 144, leucine 149–tyrosine 169, tyrosine 183–glycine 203, isoleucine 229–phenylalanine 249, tryptophan 295–isoleucine 315, methionine 323–aspartate 343, tyrosine 354–leucine 374, alanine 395–phenylalanine 415, and leucine 418–leucine 438.

It belongs to the complex I subunit 2 family. NDH is composed of at least 16 different subunits, 5 of which are encoded in the nucleus.

The protein localises to the plastid. The protein resides in the chloroplast thylakoid membrane. The catalysed reaction is a plastoquinone + NADH + (n+1) H(+)(in) = a plastoquinol + NAD(+) + n H(+)(out). It carries out the reaction a plastoquinone + NADPH + (n+1) H(+)(in) = a plastoquinol + NADP(+) + n H(+)(out). In terms of biological role, NDH shuttles electrons from NAD(P)H:plastoquinone, via FMN and iron-sulfur (Fe-S) centers, to quinones in the photosynthetic chain and possibly in a chloroplast respiratory chain. The immediate electron acceptor for the enzyme in this species is believed to be plastoquinone. Couples the redox reaction to proton translocation, and thus conserves the redox energy in a proton gradient. The protein is NAD(P)H-quinone oxidoreductase subunit 2 A, chloroplastic of Oryza nivara (Indian wild rice).